We begin with the raw amino-acid sequence, 803 residues long: Palmitoyl thioesterase CPT1C (803 aa).

Residues 1–52 (MAEAHQAVGFRPSLTSDGAEVELSAPVLQEIYLSGLRSWKRHLSRFWNDFLT) are Cytoplasmic-facing. The helical transmembrane segment at 53–75 (GVFPASPLSWLFLFSAIQLAWFL) threads the bilayer. Topologically, residues 76 to 103 (QLDPSLGLMEKIKELLPDWGGQHHGLRG) are lumenal. A helical membrane pass occupies residues 104–126 (VLAAALFASCLWGALIFTLHVAL). Topologically, residues 127-803 (RLLLSYHGWL…SKASMTSTDF (677 aa)) are cytoplasmic. The Proton acceptor role is filled by histidine 470. 552 to 564 (GKSFIRRCHLSSD) contacts CoA. (R)-carnitine is bound by residues tyrosine 586, serine 588, and threonine 599. Positions 761-803 (LFQAGQHFKRRFRGSGKENSRHRCGFLSRQTGASKASMTSTDF) are required for interaction with GRIA1. Residues 772 to 803 (FRGSGKENSRHRCGFLSRQTGASKASMTSTDF) form a disordered region. Over residues 788-803 (SRQTGASKASMTSTDF) the composition is skewed to polar residues.

The protein belongs to the carnitine/choline acetyltransferase family. Peripherally associated with AMPAR complex. AMPAR complex consists of an inner core made of 4 pore-forming GluA/GRIA proteins (GRIA1, GRIA2, GRIA3 and GRIA4) and 4 major auxiliary subunits arranged in a twofold symmetry. One of the two pairs of distinct binding sites is occupied either by CNIH2, CNIH3 or CACNG2, CACNG3. The other harbors CACNG2, CACNG3, CACNG4, CACNG8 or GSG1L. This inner core of AMPAR complex is complemented by outer core constituents binding directly to the GluA/GRIA proteins at sites distinct from the interaction sites of the inner core constituents. Outer core constituents include at least PRRT1, PRRT2, CKAMP44/SHISA9, FRRS1L and NRN1. The proteins of the inner and outer core serve as a platform for other, more peripherally associated AMPAR constituents, including CPT1C. Alone or in combination, these auxiliary subunits control the gating and pharmacology of the AMPAR complex and profoundly impact their biogenesis and protein processing. Interacts with SACM1L; the interaction regulates SACM1L phosphatidylinositol-3-phosphatase activity and translocation to endoplasmic reticulum/trans Golgi network in a malonyl-CoA dependent manner. Interacts with ATL1. As to expression, expressed predominantly in brain and testis. Expressed in motor neurons.

It localises to the cell projection. The protein resides in the dendrite. The protein localises to the axon. Its subcellular location is the endoplasmic reticulum membrane. It carries out the reaction S-hexadecanoyl-L-cysteinyl-[protein] + H2O = L-cysteinyl-[protein] + hexadecanoate + H(+). In terms of biological role, palmitoyl thioesterase specifically expressed in the endoplasmic reticulum of neurons. Modulates the trafficking of the glutamate receptor, AMPAR, to plasma membrane through depalmitoylation of GRIA1. Also regulates AMPR trafficking through the regulation of SACM1L phosphatidylinositol-3-phosphatase activity by interaction in a malonyl-CoA dependent manner. Binds malonyl-CoA and couples malonyl-CoA to ceramide levels, necessary for proper spine maturation and contributing to systemic energy homeostasis and appetite control. Binds to palmitoyl-CoA, but does not have carnitine palmitoyltransferase 1 catalytic activity or at very low levels. This Homo sapiens (Human) protein is Palmitoyl thioesterase CPT1C.